The primary structure comprises 551 residues: Mesoderm induction early response protein 3 (551 aa).

Residues 1-16 (MAEASFGSSSPVGSLS) show a composition bias toward low complexity. 2 disordered regions span residues 1–62 (MAEA…EKEG) and 113–169 (LSGD…GNSP). Basic and acidic residues predominate over residues 17-36 (SEDHDFDPTAEMLVHDYDDE). Residues serine 52, serine 53, and serine 114 each carry the phosphoserine modification. A compositionally biased stretch (polar residues) spans 121–134 (QSSADDLTPSVTSH). The span at 154–163 (KESEIEDVET) shows a compositional bias: acidic residues. Serine 156 carries the phosphoserine modification. Threonine 163 carries the phosphothreonine modification. Residues serine 165 and serine 168 each carry the phosphoserine modification. An ELM2 domain is found at 174–273 (REIMIGLEYQ…EAIERYCCNG (100 aa)). The SANT domain occupies 278 to 330 (EGMTAWTEEECRSFEHALMLHGKDFHLIQKDKVRSRTVAECVAFYYMWKKSER).

Its subcellular location is the nucleus. In terms of biological role, transcriptional repressor. This Mus musculus (Mouse) protein is Mesoderm induction early response protein 3 (Mier3).